The sequence spans 906 residues: Cadherin-2 (906 aa).

The signal sequence occupies residues 1 to 25 (MCRIAGAPRTLLPLLAALLQASVEA). A propeptide spanning residues 26–159 (SGEIALCKTG…HSGHLQRQKR (134 aa)) is cleaved from the precursor. A phosphoserine mark is found at Ser96 and Ser135. 5 consecutive Cadherin domains span residues 160–267 (DWVI…RPEF), 268–382 (LHQV…PPEF), 383–497 (TAMT…NPYF), 498–603 (APNP…DNAP), and 604–714 (QVLP…DVDR). At 160-724 (DWVIPPINLP…IVGAGLGTGA (565 aa)) the chain is on the extracellular side. Ca(2+) is bound at residue Glu170. Asn190 carries an N-linked (GlcNAc...) asparagine glycan. Ca(2+)-binding residues include Asp226, Glu228, Asp259, Met260, Asn261, Asp262, and Asn263. N-linked (GlcNAc...) asparagine glycosylation is present at Asn273. Residues Asp293, Asp295, and Asn301 each contribute to the Ca(2+) site. Residue Asn325 is glycosylated (N-linked (GlcNAc...) asparagine). Asp353 is a binding site for Ca(2+). N-linked (GlcNAc...) asparagine glycosylation is found at Asn402, Asn572, Asn622, Asn651, and Asn692. A helical transmembrane segment spans residues 725 to 745 (IIAILLCIIILLILVLMFVVW). The Cytoplasmic segment spans residues 746-906 (MKRRDKERQA…LADMYGGGDD (161 aa)). Residues 863–880 (SGSTAGSLSSLNSSSSGG) show a composition bias toward low complexity. Positions 863–884 (SGSTAGSLSSLNSSSSGGEQDY) are disordered.

In terms of assembly, homodimer (via extracellular region). Can also form heterodimers with other cadherins (via extracellular region). Dimerization occurs in trans, i.e. with a cadherin chain from another cell. Interacts with CDCP1. Interacts with PCDH8; this complex may also include TAOK2. The interaction with PCDH8 may lead to internalization through TAOK2/p38 MAPK pathway. Identified in a complex containing FGFR4, NCAM1, CDH2, PLCG1, FRS2, SRC, SHC1, GAP43 and CTTN. May interact with OBSCN (via protein kinase domain 2). Interacts with FBXO45. Cleaved by MMP24. Ectodomain cleavage leads to the generation of a soluble 90 kDa N-terminal soluble fragment and a 45 kDa membrane-bound C-terminal fragment 1 (CTF1), which is further cleaved by gamma-secretase into a 35 kDa. Cleavage in neural stem cells by MMP24 affects CDH2-mediated anchorage of neural stem cells to ependymocytes in the adult subependymal zone, leading to modulate neural stem cell quiescence.

Its subcellular location is the cell membrane. It localises to the sarcolemma. The protein resides in the cell junction. It is found in the cell surface. The protein localises to the desmosome. Its subcellular location is the adherens junction. In terms of biological role, calcium-dependent cell adhesion protein; preferentially mediates homotypic cell-cell adhesion by dimerization with a CDH2 chain from another cell. Cadherins may thus contribute to the sorting of heterogeneous cell types. Acts as a regulator of neural stem cells quiescence by mediating anchorage of neural stem cells to ependymocytes in the adult subependymal zone: upon cleavage by MMP24, CDH2-mediated anchorage is affected, leading to modulate neural stem cell quiescence. Plays a role in cell-to-cell junction formation between pancreatic beta cells and neural crest stem (NCS) cells, promoting the formation of processes by NCS cells. Required for proper neurite branching. Required for pre- and postsynaptic organization. CDH2 may be involved in neuronal recognition mechanism. In hippocampal neurons, may regulate dendritic spine density. The polypeptide is Cadherin-2 (CDH2) (Callithrix jacchus (White-tufted-ear marmoset)).